A 318-amino-acid polypeptide reads, in one-letter code: Malate dehydrogenase (318 aa).

NAD(+)-binding positions include 10–15 (GGGQIG) and Asp34. The substrate site is built by Arg83 and Arg89. Residues Asn96 and 119-121 (LSN) contribute to the NAD(+) site. 2 residues coordinate substrate: Asn121 and Arg152. Residue His176 is the Proton acceptor of the active site.

Belongs to the LDH/MDH superfamily. MDH type 3 family.

The enzyme catalyses (S)-malate + NAD(+) = oxaloacetate + NADH + H(+). Catalyzes the reversible oxidation of malate to oxaloacetate. The protein is Malate dehydrogenase of Syntrophotalea carbinolica (strain DSM 2380 / NBRC 103641 / GraBd1) (Pelobacter carbinolicus).